We begin with the raw amino-acid sequence, 139 residues long: Large-conductance mechanosensitive channel (139 aa).

Helical transmembrane passes span alanine 9–phenylalanine 29 and isoleucine 79–isoleucine 99.

It belongs to the MscL family. Homopentamer.

Its subcellular location is the cell inner membrane. Its function is as follows. Channel that opens in response to stretch forces in the membrane lipid bilayer. May participate in the regulation of osmotic pressure changes within the cell. The polypeptide is Large-conductance mechanosensitive channel (Pseudomonas putida (strain ATCC 47054 / DSM 6125 / CFBP 8728 / NCIMB 11950 / KT2440)).